Here is a 226-residue protein sequence, read N- to C-terminus: MNEDLFTPFTTPTVLGLPAAILVILFPPLLVPTSKHFINNRLITTQQWLIRLTLKQMMITHNTKGRTWSLMLTSLIIFIASTNLLGLFPYSFTPTTQLSMNLAMAIPLWASTVAMGLRFKAKISLAHLLPQGTPTPLIPMLIIIETISLFIQPLALAVRLTANITAGHLLMHLIGSATLTMLTINLPLTLITLTILTLLTILEIAVALIQAYVFTLLVSLYLHDNS.

The next 6 membrane-spanning stretches (helical) occupy residues proline 12 to proline 32, tryptophan 68 to phenylalanine 88, glutamine 97 to leucine 117, isoleucine 138 to valine 158, isoleucine 164 to isoleucine 184, and threonine 189 to isoleucine 209.

The protein belongs to the ATPase A chain family. Component of the ATP synthase complex composed at least of ATP5F1A/subunit alpha, ATP5F1B/subunit beta, ATP5MC1/subunit c (homooctomer), MT-ATP6/subunit a, MT-ATP8/subunit 8, ATP5ME/subunit e, ATP5MF/subunit f, ATP5MG/subunit g, ATP5MK/subunit k, ATP5MJ/subunit j, ATP5F1C/subunit gamma, ATP5F1D/subunit delta, ATP5F1E/subunit epsilon, ATP5PF/subunit F6, ATP5PB/subunit b, ATP5PD/subunit d, ATP5PO/subunit OSCP. ATP synthase complex consists of a soluble F(1) head domain (subunits alpha(3) and beta(3)) - the catalytic core - and a membrane F(0) domain - the membrane proton channel (subunits c, a, 8, e, f, g, k and j). These two domains are linked by a central stalk (subunits gamma, delta, and epsilon) rotating inside the F1 region and a stationary peripheral stalk (subunits F6, b, d, and OSCP). Interacts with DNAJC30; interaction is direct.

The protein resides in the mitochondrion inner membrane. It carries out the reaction H(+)(in) = H(+)(out). Its function is as follows. Subunit a, of the mitochondrial membrane ATP synthase complex (F(1)F(0) ATP synthase or Complex V) that produces ATP from ADP in the presence of a proton gradient across the membrane which is generated by electron transport complexes of the respiratory chain. ATP synthase complex consist of a soluble F(1) head domain - the catalytic core - and a membrane F(1) domain - the membrane proton channel. These two domains are linked by a central stalk rotating inside the F(1) region and a stationary peripheral stalk. During catalysis, ATP synthesis in the catalytic domain of F(1) is coupled via a rotary mechanism of the central stalk subunits to proton translocation. With the subunit c (ATP5MC1), forms the proton-conducting channel in the F(0) domain, that contains two crucial half-channels (inlet and outlet) that facilitate proton movement from the mitochondrial intermembrane space (IMS) into the matrix. Protons are taken up via the inlet half-channel and released through the outlet half-channel, following a Grotthuss mechanism. In Pongo pygmaeus (Bornean orangutan), this protein is ATP synthase F(0) complex subunit a.